The sequence spans 303 residues: Hydroxyacylglutathione hydrolase, mitochondrial (303 aa).

6 residues coordinate Zn(2+): histidine 97, histidine 99, aspartate 101, histidine 102, histidine 153, and aspartate 177. Substrate-binding positions include 186–188 (KFF), 216–218 (HEY), and 292–295 (RKEK). Histidine 216 is a binding site for Zn(2+).

The protein belongs to the metallo-beta-lactamase superfamily. Glyoxalase II family. In terms of assembly, monomer. The cofactor is Zn(2+).

It localises to the mitochondrion matrix. The protein resides in the cytoplasm. It carries out the reaction an S-(2-hydroxyacyl)glutathione + H2O = a 2-hydroxy carboxylate + glutathione + H(+). It catalyses the reaction (R)-S-lactoylglutathione + H2O = (R)-lactate + glutathione + H(+). Its function is as follows. Thiolesterase that catalyzes the hydrolysis of S-D-lactoyl-glutathione to form glutathione and D-lactic acid. In Danio rerio (Zebrafish), this protein is Hydroxyacylglutathione hydrolase, mitochondrial (hagh).